The chain runs to 500 residues: Lysine--tRNA ligase (500 aa).

Asp-412 and Glu-419 together coordinate Mg(2+).

It belongs to the class-II aminoacyl-tRNA synthetase family. In terms of assembly, homodimer. Requires Mg(2+) as cofactor.

It localises to the cytoplasm. It catalyses the reaction tRNA(Lys) + L-lysine + ATP = L-lysyl-tRNA(Lys) + AMP + diphosphate. This is Lysine--tRNA ligase from Kineococcus radiotolerans (strain ATCC BAA-149 / DSM 14245 / SRS30216).